We begin with the raw amino-acid sequence, 546 residues long: Chaperonin GroEL 1 (546 aa).

ATP is bound by residues 30–33 (TLGP), lysine 51, 87–91 (DGTTT), glycine 415, 479–481 (NAA), and aspartate 495. The interval 526–546 (KEDAPMPGGMPGGMGGMGMDM) is disordered. Residues 534 to 546 (GMPGGMGGMGMDM) show a composition bias toward gly residues.

Belongs to the chaperonin (HSP60) family. In terms of assembly, forms a cylinder of 14 subunits composed of two heptameric rings stacked back-to-back. Interacts with the co-chaperonin GroES.

The protein resides in the cytoplasm. The enzyme catalyses ATP + H2O + a folded polypeptide = ADP + phosphate + an unfolded polypeptide.. Together with its co-chaperonin GroES, plays an essential role in assisting protein folding. The GroEL-GroES system forms a nano-cage that allows encapsulation of the non-native substrate proteins and provides a physical environment optimized to promote and accelerate protein folding. This Burkholderia vietnamiensis (strain G4 / LMG 22486) (Burkholderia cepacia (strain R1808)) protein is Chaperonin GroEL 1.